The sequence spans 635 residues: PTS system mannitol-specific EIICBA component (635 aa).

A PTS EIIC type-2 domain is found at 12–342; it reads FGRFLSNMVM…LFKTSKVKER (331 aa). 6 helical membrane passes run 24–45, 50–70, 134–155, 165–185, 273–292, and 313–334; these read IGAF…WLPN, KLVG…TGGK, SAGI…PAVE, VNFM…EPAK, VILG…GGLV, and FANI…AVLF. The PTS EIIB type-2 domain occupies 378 to 473; the sequence is RKIIVACDAG…RLVAAQRHID (96 aa). The active-site Phosphocysteine intermediate; for EIIB activity is cysteine 384. Cysteine 384 is modified (phosphocysteine; by EIIA). Residues 494 to 635 form the PTS EIIA type-2 domain; sequence FQLGADNIFL…VDEVLALLNK (142 aa). Histidine 554 functions as the Tele-phosphohistidine intermediate; for EIIA activity in the catalytic mechanism. Histidine 554 bears the Phosphohistidine; by HPr mark.

As to quaternary structure, homodimer. An intramolecular phosphotransfer takes places between His-554 and Cys-384.

The protein resides in the cell inner membrane. The enzyme catalyses D-mannitol(out) + N(pros)-phospho-L-histidyl-[protein] = D-mannitol 1-phosphate(in) + L-histidyl-[protein]. Functionally, the phosphoenolpyruvate-dependent sugar phosphotransferase system (sugar PTS), a major carbohydrate active transport system, catalyzes the phosphorylation of incoming sugar substrates concomitantly with their translocation across the cell membrane. This system is involved in D-mannitol transport. The chain is PTS system mannitol-specific EIICBA component from Klebsiella pneumoniae.